Reading from the N-terminus, the 440-residue chain is 3-phosphoshikimate 1-carboxyvinyltransferase (440 aa).

Lysine 26, serine 27, and arginine 31 together coordinate 3-phosphoshikimate. Lysine 26 contacts phosphoenolpyruvate. Phosphoenolpyruvate is bound by residues glycine 99 and arginine 127. Serine 172, glutamine 174, aspartate 320, and lysine 347 together coordinate 3-phosphoshikimate. Glutamine 174 is a binding site for phosphoenolpyruvate. Aspartate 320 (proton acceptor) is an active-site residue. Phosphoenolpyruvate is bound by residues arginine 351 and arginine 392.

It belongs to the EPSP synthase family. In terms of assembly, monomer.

The protein localises to the cytoplasm. The enzyme catalyses 3-phosphoshikimate + phosphoenolpyruvate = 5-O-(1-carboxyvinyl)-3-phosphoshikimate + phosphate. The protein operates within metabolic intermediate biosynthesis; chorismate biosynthesis; chorismate from D-erythrose 4-phosphate and phosphoenolpyruvate: step 6/7. In terms of biological role, catalyzes the transfer of the enolpyruvyl moiety of phosphoenolpyruvate (PEP) to the 5-hydroxyl of shikimate-3-phosphate (S3P) to produce enolpyruvyl shikimate-3-phosphate and inorganic phosphate. In Xanthomonas axonopodis pv. citri (strain 306), this protein is 3-phosphoshikimate 1-carboxyvinyltransferase.